A 354-amino-acid chain; its full sequence is UDP-3-O-acylglucosamine N-acyltransferase (354 aa).

His245 acts as the Proton acceptor in catalysis.

The protein belongs to the transferase hexapeptide repeat family. LpxD subfamily. As to quaternary structure, homotrimer.

It carries out the reaction a UDP-3-O-[(3R)-3-hydroxyacyl]-alpha-D-glucosamine + a (3R)-hydroxyacyl-[ACP] = a UDP-2-N,3-O-bis[(3R)-3-hydroxyacyl]-alpha-D-glucosamine + holo-[ACP] + H(+). It participates in bacterial outer membrane biogenesis; LPS lipid A biosynthesis. In terms of biological role, catalyzes the N-acylation of UDP-3-O-acylglucosamine using 3-hydroxyacyl-ACP as the acyl donor. Is involved in the biosynthesis of lipid A, a phosphorylated glycolipid that anchors the lipopolysaccharide to the outer membrane of the cell. The protein is UDP-3-O-acylglucosamine N-acyltransferase of Anaeromyxobacter sp. (strain K).